Reading from the N-terminus, the 151-residue chain is Large ribosomal subunit protein bL9 (151 aa).

This sequence belongs to the bacterial ribosomal protein bL9 family.

Binds to the 23S rRNA. The protein is Large ribosomal subunit protein bL9 of Mycobacteroides abscessus (strain ATCC 19977 / DSM 44196 / CCUG 20993 / CIP 104536 / JCM 13569 / NCTC 13031 / TMC 1543 / L948) (Mycobacterium abscessus).